The sequence spans 803 residues: Mechanosensitive cation channel TMEM63A (803 aa).

The Extracellular portion of the chain corresponds to 1 to 51; it reads MTDSPFLELWQSRTVAIRERLGIGDQPNDSYCYNSAKNSTVLQGVTFGGIP. Residues 52-74 form a helical membrane-spanning segment; it reads TVLFIDVSCFLFLIVVFSIIRRK. Residues 75 to 133 are Cytoplasmic-facing; that stretch reads FWDYGRIALVSEGNSESRFRRLSSSSSGQQDFESELGCCSWLTAIFRLHDDQILEWCGE. Residues 134–166 traverse the membrane as a helical segment; the sequence is DAIHYLSFQRHIIFLLVVVSCLSLCIILPVNLS. Topologically, residues 167–190 are extracellular; it reads GDLLDKDPYSFGRTTIANLQTDNN. Residues 191–216 form a helical membrane-spanning segment; sequence LLWLHTIFAILYLILTVVFMRHHTQS. At 217–415 the chain is on the cytoplasmic side; the sequence is IKYKEESLVR…CWKNLSIQGF (199 aa). The interval 218 to 413 is intracellular linker IL2; confers mechanosensitivity; it reads KYKEESLVRR…DICWKNLSIQ (196 aa). Residues 416–443 traverse the membrane as a helical segment; it reads RWWFQWLGINFILFVGLFFLTTPSIILS. Residues 444–461 lie on the Extracellular side of the membrane; that stretch reads TMDKFNVTKPIHALNDPI. The helical transmembrane segment at 462–489 threads the bilayer; that stretch reads ISQFFPTLLLWSFSALLPTIVCYSTLLE. Residues 490–494 are Cytoplasmic-facing; it reads SHWTK. Residues 495–531 traverse the membrane as a helical segment; sequence SGENRIMMTKVYIFLIFMVLILPSLGLTSLDFFFRWL. The Extracellular portion of the chain corresponds to 532–553; that stretch reads FDKTSSEASIRLECVFLPDQGA. The chain crosses the membrane as a helical span at residues 554–585; it reads FFVNYVIASAFIGNGMELLRLPGLILYTFRMV. Positions 554-585 are gating helix; that stretch reads FFVNYVIASAFIGNGMELLRLPGLILYTFRMV. The Cytoplasmic segment spans residues 586–605; sequence MAKTAADRRNVKQHQAFEYE. Residues 606-623 traverse the membrane as a helical segment; that stretch reads FGAMYAWMLCVFTVIMAY. Over 624-627 the chain is Extracellular; sequence SITC. A helical transmembrane segment spans residues 628–650; it reads PIIVPFGLIYILLKHMVDRHNLY. Residues 651 to 660 lie on the Cytoplasmic side of the membrane; the sequence is FAYLPAKLEK. Residues 661–688 form a helical membrane-spanning segment; sequence RIHFAAVNQALAAPILCLFWLYFFSFLR. Residues 689 to 693 lie on the Extracellular side of the membrane; the sequence is LGLKA. The helical transmembrane segment at 694–708 threads the bilayer; the sequence is PLTLFTFLVLLLTIL. Residues 709 to 803 lie on the Cytoplasmic side of the membrane; that stretch reads VCLAYTCFGC…DSVAAADQED (95 aa).

This sequence belongs to the CSC1 (TC 1.A.17) family. As to quaternary structure, (Microbial infection) Interacts with H.contortus GAL-1 (via domain galectin 1).

The protein localises to the lysosome membrane. It localises to the early endosome membrane. Its subcellular location is the cell membrane. The catalysed reaction is Ca(2+)(in) = Ca(2+)(out). Functionally, mechanosensitive cation channel with low conductance and high activation threshold. In contrast to TMEM63B, does not show phospholipid scramblase activity. Acts as a regulator of lysosomal morphology by mediating lysosomal mechanosensitivity. Important for the baby's first breath and respiration throughout life. Upon lung inflation conducts cation currents in alveolar type 1 and 2 cells triggering lamellar body exocytosis and surfactant secretion into airspace. Also acts as an osmosensitive cation channel preferentially activated by hypotonic stress. Its function is as follows. (Microbial infection) Involved in the immunomodulatory effects exerted by H.contortus GAL-1 on host peripheral blood mononuclear cells to down-regulate host immune response. The polypeptide is Mechanosensitive cation channel TMEM63A (TMEM63A) (Capra hircus (Goat)).